We begin with the raw amino-acid sequence, 327 residues long: Probable cell division protein WhiA (327 aa).

The H-T-H motif DNA-binding region spans serine 275–lysine 308. The segment at aspartate 304 to alanine 327 is disordered.

The protein belongs to the WhiA family.

Functionally, involved in cell division and chromosome segregation. This is Probable cell division protein WhiA from Mycolicibacterium gilvum (strain PYR-GCK) (Mycobacterium gilvum (strain PYR-GCK)).